A 408-amino-acid chain; its full sequence is S100P-binding protein (408 aa).

3 disordered regions span residues 1-111 (MMCS…AETP), 162-234 (KDET…SENP), and 271-291 (VSTSSNKQDVLNKDSGKMKGH). Positions 28-59 (SLDEDGLDDSLLELSEGEEDDGDVNYTEEEID) are enriched in acidic residues. Composition is skewed to basic and acidic residues over residues 77–86 (DGGHVEKGER) and 162–185 (KDETDSSKDTEKLSSLGEEMREDG). S187 is modified (phosphoserine). Residues 188–234 (PNESKLCTESEGISPNNSAWNGPQLSSSNNNFQQTVSDKNMPDSENP) show a composition bias toward polar residues. The span at 280–291 (VLNKDSGKMKGH) shows a compositional bias: basic and acidic residues.

In terms of assembly, interacts with S100P. In terms of tissue distribution, expressed in brain, spleen, and lung. Not detected in pancreas or liver. In pancreas, expressed predominantly in islet cells and to a lesser extent in acinar cells, but not expressed in ductal cells. Up-regulated in various pancreatic ductal adenocarcinomas and pancreatic intraepithelial neoplasias. Detected in pancreatic ductal adenocarcinoma cells (at protein level). Not detected in non-neoplastic ductal epithelium (at protein level).

The protein resides in the nucleus. The protein is S100P-binding protein of Homo sapiens (Human).